We begin with the raw amino-acid sequence, 217 residues long: Uracil-DNA glycosylase (217 aa).

Residue aspartate 62 is the Proton acceptor of the active site.

This sequence belongs to the uracil-DNA glycosylase (UDG) superfamily. UNG family.

It localises to the cytoplasm. The catalysed reaction is Hydrolyzes single-stranded DNA or mismatched double-stranded DNA and polynucleotides, releasing free uracil.. Excises uracil residues from the DNA which can arise as a result of misincorporation of dUMP residues by DNA polymerase or due to deamination of cytosine. The chain is Uracil-DNA glycosylase from Streptococcus thermophilus (strain ATCC BAA-491 / LMD-9).